The chain runs to 344 residues: Adenosine deaminase (344 aa).

Residues His14 and His16 each contribute to the Zn(2+) site. Substrate contacts are provided by His16, Asp18, and Gly177. Zn(2+) is bound at residue His204. Residue Glu207 is the Proton donor of the active site. Asp284 serves as a coordination point for Zn(2+).

It belongs to the metallo-dependent hydrolases superfamily. Adenosine and AMP deaminases family. Adenosine deaminase subfamily. Zn(2+) serves as cofactor.

The catalysed reaction is adenosine + H2O + H(+) = inosine + NH4(+). It carries out the reaction 2'-deoxyadenosine + H2O + H(+) = 2'-deoxyinosine + NH4(+). Catalyzes the hydrolytic deamination of adenosine and 2-deoxyadenosine. In Haemophilus ducreyi (strain 35000HP / ATCC 700724), this protein is Adenosine deaminase.